We begin with the raw amino-acid sequence, 549 residues long: ATP synthase subunit alpha (549 aa).

172–179 (GDRKTGKT) lines the ATP pocket. The tract at residues 513 to 549 (SSTGESVVPDEHVEAMDEEDLGKESVKVKKPAPQKKK) is disordered. Positions 540–549 (VKKPAPQKKK) are enriched in basic residues.

It belongs to the ATPase alpha/beta chains family. As to quaternary structure, F-type ATPases have 2 components, CF(1) - the catalytic core - and CF(0) - the membrane proton channel. CF(1) has five subunits: alpha(3), beta(3), gamma(1), delta(1), epsilon(1). CF(0) has three main subunits: a(1), b(2) and c(9-12). The alpha and beta chains form an alternating ring which encloses part of the gamma chain. CF(1) is attached to CF(0) by a central stalk formed by the gamma and epsilon chains, while a peripheral stalk is formed by the delta and b chains.

Its subcellular location is the cell membrane. It carries out the reaction ATP + H2O + 4 H(+)(in) = ADP + phosphate + 5 H(+)(out). Its function is as follows. Produces ATP from ADP in the presence of a proton gradient across the membrane. The alpha chain is a regulatory subunit. This Mycobacterium marinum (strain ATCC BAA-535 / M) protein is ATP synthase subunit alpha.